Here is a 306-residue protein sequence, read N- to C-terminus: Pantothenate kinase (306 aa).

91 to 98 (GSVAVGKS) provides a ligand contact to ATP.

The protein belongs to the prokaryotic pantothenate kinase family.

It localises to the cytoplasm. It catalyses the reaction (R)-pantothenate + ATP = (R)-4'-phosphopantothenate + ADP + H(+). The protein operates within cofactor biosynthesis; coenzyme A biosynthesis; CoA from (R)-pantothenate: step 1/5. The protein is Pantothenate kinase of Streptococcus pneumoniae serotype 2 (strain D39 / NCTC 7466).